A 311-amino-acid polypeptide reads, in one-letter code: Probable cell division protein WhiA (311 aa).

The segment at residues 274 to 308 is a DNA-binding region (H-T-H motif); that stretch reads SLKELGEMIPSGAISKSGINHRIRKINEFAEKLRE.

Belongs to the WhiA family.

In terms of biological role, involved in cell division and chromosome segregation. The chain is Probable cell division protein WhiA from Enterococcus faecalis (strain ATCC 700802 / V583).